Consider the following 99-residue polypeptide: Large ribosomal subunit protein bL21 (99 aa).

Belongs to the bacterial ribosomal protein bL21 family. In terms of assembly, part of the 50S ribosomal subunit. Contacts protein L20.

In terms of biological role, this protein binds to 23S rRNA in the presence of protein L20. The chain is Large ribosomal subunit protein bL21 from Acholeplasma laidlawii (strain PG-8A).